A 529-amino-acid chain; its full sequence is Listeriolysin O (529 aa).

The signal sequence occupies residues Met1–Ala24. The segment at Ser35–Glu54 is disordered. 4 beta stranded membrane-spanning segments follow: residues Glu214 to Ala227, Val234 to Lys243, Ser312 to Ala321, and Ser329 to Ser341. The short motif at Glu483–Arg493 is the Conserved undecapeptide element. Residues Thr515–Leu516 carry the Cholesterol binding motif.

It belongs to the cholesterol-dependent cytolysin family. As to quaternary structure, homooligomeric pore complex of 35 to 50 subunits; when inserted in the host membrane.

It is found in the secreted. The protein resides in the host membrane. The protein localises to the host cell membrane. Its activity is regulated as follows. Activity of listeriolysin O is regulated on multiple levels. It should be high in the phagosome, thereby allowing escape of the bacteria from the phagosomal compartment. Then, once inside the host cytosol, the activity must be controlled to prevent lysis of the host plasma membrane and loss of the intracellular environment. Its function is as follows. A cholesterol-dependent toxin that causes cytolysis by forming pores in cholesterol containing host membranes. After binding to target membranes, the protein undergoes a major conformation change, leading to its insertion in the host membrane and formation of an oligomeric pore complex. Cholesterol is required for binding to host membranes, membrane insertion and pore formation; cholesterol binding is mediated by a Thr-Leu pair in the C-terminus. Acts as a major virulence factor required for the escape of bacteria from phagosomal vacuoles and entry into the host cytosol. Can be reversibly inactivated by oxidation. This chain is Listeriolysin O (hly), found in Listeria monocytogenes serotype 1/2a (strain 08-5578).